The chain runs to 473 residues: Aspartyl aminopeptidase 1 (473 aa).

His-93 contacts Zn(2+). Substrate is bound at residue His-168. The Zn(2+) site is built by Asp-262, Glu-298, Glu-299, and Asp-343. Residue Glu-298 coordinates substrate. Asp-343, His-346, Lys-371, and Tyr-378 together coordinate substrate. A Zn(2+)-binding site is contributed by His-437.

This sequence belongs to the peptidase M18 family. Tetrahedron-shaped homododecamer built from six homodimers. Interacts with autophagy receptor Nbr1. It depends on Zn(2+) as a cofactor.

It is found in the cytoplasm. Its subcellular location is the vacuole lumen. It catalyses the reaction Release of an N-terminal aspartate or glutamate from a peptide, with a preference for aspartate.. Aspartyl aminopeptidase that is able to remove aspartyl residue at N-terminus of angiotensin I. Also acts as a chaperone and efficiently suppressed the thermal aggregation of citrate synthase. The polypeptide is Aspartyl aminopeptidase 1 (ape4) (Schizosaccharomyces pombe (strain 972 / ATCC 24843) (Fission yeast)).